A 306-amino-acid chain; its full sequence is Oxygen-dependent coproporphyrinogen-III oxidase (306 aa).

Ser-99 serves as a coordination point for substrate. The a divalent metal cation site is built by His-103 and His-113. His-113 serves as the catalytic Proton donor. 115-117 lines the substrate pocket; sequence NVR. A divalent metal cation is bound by residues His-152 and His-182. Residues 247 to 282 form an important for dimerization region; that stretch reads YVEFNLVFDRGTLFGLQSGGRTESILMSMPPVANWR. 265–267 is a binding site for substrate; it reads GGR.

The protein belongs to the aerobic coproporphyrinogen-III oxidase family. Homodimer. It depends on a divalent metal cation as a cofactor.

The protein localises to the cytoplasm. It carries out the reaction coproporphyrinogen III + O2 + 2 H(+) = protoporphyrinogen IX + 2 CO2 + 2 H2O. It functions in the pathway porphyrin-containing compound metabolism; protoporphyrin-IX biosynthesis; protoporphyrinogen-IX from coproporphyrinogen-III (O2 route): step 1/1. Involved in the heme biosynthesis. Catalyzes the aerobic oxidative decarboxylation of propionate groups of rings A and B of coproporphyrinogen-III to yield the vinyl groups in protoporphyrinogen-IX. In Burkholderia ambifaria (strain MC40-6), this protein is Oxygen-dependent coproporphyrinogen-III oxidase.